Here is a 142-residue protein sequence, read N- to C-terminus: Large ribosomal subunit protein uL11 (142 aa).

Belongs to the universal ribosomal protein uL11 family. Part of the ribosomal stalk of the 50S ribosomal subunit. Interacts with L10 and the large rRNA to form the base of the stalk. L10 forms an elongated spine to which L12 dimers bind in a sequential fashion forming a multimeric L10(L12)X complex. Post-translationally, one or more lysine residues are methylated.

In terms of biological role, forms part of the ribosomal stalk which helps the ribosome interact with GTP-bound translation factors. This chain is Large ribosomal subunit protein uL11, found in Haemophilus influenzae (strain PittGG).